Here is a 267-residue protein sequence, read N- to C-terminus: Indole-3-glycerol phosphate synthase 1 (267 aa).

It belongs to the TrpC family.

It carries out the reaction 1-(2-carboxyphenylamino)-1-deoxy-D-ribulose 5-phosphate + H(+) = (1S,2R)-1-C-(indol-3-yl)glycerol 3-phosphate + CO2 + H2O. The protein operates within amino-acid biosynthesis; L-tryptophan biosynthesis; L-tryptophan from chorismate: step 4/5. The protein is Indole-3-glycerol phosphate synthase 1 (trpC1) of Ralstonia nicotianae (strain ATCC BAA-1114 / GMI1000) (Ralstonia solanacearum).